A 210-amino-acid chain; its full sequence is RNA chaperone ProQ (210 aa).

A compositionally biased stretch (basic and acidic residues) spans 98–127 (HAKASLEESKAKVAARRKEQAKKAREEAKA). The tract at residues 98-155 (HAKASLEESKAKVAARRKEQAKKAREEAKAKKPARATTPPKRRPQPAAVAKKQEKPVE) is disordered.

This sequence belongs to the ProQ family.

The protein resides in the cytoplasm. In terms of biological role, RNA chaperone with significant RNA binding, RNA strand exchange and RNA duplexing activities. The protein is RNA chaperone ProQ of Aliivibrio salmonicida (strain LFI1238) (Vibrio salmonicida (strain LFI1238)).